The sequence spans 261 residues: Thioesterase frbD (261 aa).

The protein belongs to the AMT4 thioesterase family.

Its pathway is antifungal biosynthesis. In terms of biological role, thioesterase; part of the gene cluster that mediates the biosynthesis of the antifungal antibiotic FR901469, an inhibitor of beta-1,3-glucansynthase, exerting antifungal activity against the pathogenes Candida albicans and Aspergillus fumigatus. FR901469 is a cyclic depsipeptide containing 12 amino acid residues and a fatty acid chain. The NRPS frbI contains 12 modules responsible for the formation of the depsipeptide backbone which is denoted as Acyl-Thr-Ala-Tyr-Val-4OHPro-Thr-Thr-3OHPro-threo3OHGln-Gly-Thr-Orn-OH (C71H116N14O23). The PKS frbB is probably involved in the production of the hydrocarbon chain, and the acyl-CoA ligase frbC might be involved in the transport of the chain to the peptide ptoduct of frbI. Because FR901469 contains 3 hydroxylated amino acid residues, the 3 oxygenases frbA, frbH, and frbJ might be participating in amino acid hydroxylation. As no thioesterase domains were detected in frbI or frbB, the thioesterases frbD and frbE may instead release and cyclize the products of the NRPS and PKS, respectively. The sequence is that of Thioesterase frbD from Dothideomycetidae sp. (strain 11243) (Fungal sp. (strain No.11243)).